The chain runs to 150 residues: Protein NrdI (150 aa).

It belongs to the NrdI family.

In terms of biological role, probably involved in ribonucleotide reductase function. The protein is Protein NrdI of Mycobacterium avium (strain 104).